We begin with the raw amino-acid sequence, 110 residues long: Phosphoribosyl-AMP cyclohydrolase (110 aa).

Asp-80 serves as a coordination point for Mg(2+). A Zn(2+)-binding site is contributed by Cys-81. Residues Asp-82 and Asp-84 each coordinate Mg(2+). Residues Cys-97 and Cys-104 each contribute to the Zn(2+) site.

Belongs to the PRA-CH family. In terms of assembly, homodimer. Mg(2+) is required as a cofactor. Requires Zn(2+) as cofactor.

The protein resides in the cytoplasm. The catalysed reaction is 1-(5-phospho-beta-D-ribosyl)-5'-AMP + H2O = 1-(5-phospho-beta-D-ribosyl)-5-[(5-phospho-beta-D-ribosylamino)methylideneamino]imidazole-4-carboxamide. It participates in amino-acid biosynthesis; L-histidine biosynthesis; L-histidine from 5-phospho-alpha-D-ribose 1-diphosphate: step 3/9. Catalyzes the hydrolysis of the adenine ring of phosphoribosyl-AMP. This chain is Phosphoribosyl-AMP cyclohydrolase, found in Clostridium botulinum (strain Okra / Type B1).